A 185-amino-acid chain; its full sequence is MAKYDKADIERRMAGAVESLKSDLSGLRTGRANTSLLDPVVVEVYGAMMPLNQVATVNAPEPRMLAVQVWDKANVSAVEKGITKANLGLNPMTDGQTVRLPMPDLTEERRKELAKLAGQYAEKAKIAIRNVRRDGMEDLKADEKAKDISEDDRKRMEDEVQKLTDKYVAEADSAAEAKEKEIMTQ.

The segment at 137–159 (EDLKADEKAKDISEDDRKRMEDE) is disordered.

The protein belongs to the RRF family.

It is found in the cytoplasm. Responsible for the release of ribosomes from messenger RNA at the termination of protein biosynthesis. May increase the efficiency of translation by recycling ribosomes from one round of translation to another. This is Ribosome-recycling factor from Erythrobacter litoralis (strain HTCC2594).